A 590-amino-acid polypeptide reads, in one-letter code: Asparagine synthetase [glutamine-hydrolyzing] (590 aa).

Catalysis depends on Cys2, which acts as the For GATase activity. Residues 2–185 form the Glutamine amidotransferase type-2 domain; the sequence is CGILAVLGCS…PGNLYSSRSG (184 aa). L-glutamine contacts are provided by residues 50-54, 75-77, and Asp98; these read RLAII and NGE. Residues 193-516 enclose the Asparagine synthetase domain; the sequence is PQWYNETIPS…PQNSARFTVP (324 aa). ATP is bound by residues Leu231, Val267, and 341 to 342; that span reads SG.

The catalysed reaction is L-aspartate + L-glutamine + ATP + H2O = L-asparagine + L-glutamate + AMP + diphosphate + H(+). Its pathway is amino-acid biosynthesis; L-asparagine biosynthesis; L-asparagine from L-aspartate (L-Gln route): step 1/1. This Asparagus officinalis (Garden asparagus) protein is Asparagine synthetase [glutamine-hydrolyzing].